The following is a 406-amino-acid chain: Renin (406 aa).

Positions 1 to 23 (MDGWRRMPRWGLLLLLWGSCTFG) are cleaved as a signal peptide. A propeptide spans 24–66 (LPTDTTTFKRIFLKRMPSIRESLKERGVDMARLGPEWSQPMKR) (activation peptide). Asn-71 carries an N-linked (GlcNAc...) asparagine glycan. The region spanning 86 to 403 (YYGEIGIGTP…DRRNNRIGFA (318 aa)) is the Peptidase A1 domain. The active site involves Asp-104. A disulfide bridge connects residues Cys-117 and Cys-124. N-linked (GlcNAc...) asparagine glycosylation is present at Asn-141. The cysteines at positions 283 and 287 are disulfide-linked. Asp-292 is a catalytic residue. The cysteines at positions 325 and 362 are disulfide-linked.

Belongs to the peptidase A1 family. Interacts with ATP6AP2.

The protein resides in the secreted. It is found in the membrane. The catalysed reaction is Cleavage of Leu-|-Xaa bond in angiotensinogen to generate angiotensin I.. With respect to regulation, interaction with ATP6AP2 results in a 5-fold increased efficiency in angiotensinogen processing. Functionally, renin is a highly specific endopeptidase, whose only known function is to generate angiotensin I from angiotensinogen in the plasma, initiating a cascade of reactions that produce an elevation of blood pressure and increased sodium retention by the kidney. The sequence is that of Renin (REN) from Homo sapiens (Human).